A 232-amino-acid chain; its full sequence is Large ribosomal subunit protein uL1 (232 aa).

This sequence belongs to the universal ribosomal protein uL1 family. In terms of assembly, part of the 50S ribosomal subunit.

Binds directly to 23S rRNA. The L1 stalk is quite mobile in the ribosome, and is involved in E site tRNA release. In terms of biological role, protein L1 is also a translational repressor protein, it controls the translation of the L11 operon by binding to its mRNA. In Dinoroseobacter shibae (strain DSM 16493 / NCIMB 14021 / DFL 12), this protein is Large ribosomal subunit protein uL1.